Here is an 876-residue protein sequence, read N- to C-terminus: Alanine--tRNA ligase (876 aa).

His564, His568, Cys666, and His670 together coordinate Zn(2+).

The protein belongs to the class-II aminoacyl-tRNA synthetase family. Homotetramer. Zn(2+) serves as cofactor.

It is found in the cytoplasm. The enzyme catalyses tRNA(Ala) + L-alanine + ATP = L-alanyl-tRNA(Ala) + AMP + diphosphate. Functionally, catalyzes the attachment of alanine to tRNA(Ala) in a two-step reaction: alanine is first activated by ATP to form Ala-AMP and then transferred to the acceptor end of tRNA(Ala). Also edits incorrectly charged Ser-tRNA(Ala) and Gly-tRNA(Ala) via its editing domain. This Salmonella choleraesuis (strain SC-B67) protein is Alanine--tRNA ligase.